The chain runs to 212 residues: Large ribosomal subunit protein uL3 (212 aa).

Gln-153 carries the post-translational modification N5-methylglutamine.

Belongs to the universal ribosomal protein uL3 family. As to quaternary structure, part of the 50S ribosomal subunit. Forms a cluster with proteins L14 and L19. Methylated by PrmB.

Its function is as follows. One of the primary rRNA binding proteins, it binds directly near the 3'-end of the 23S rRNA, where it nucleates assembly of the 50S subunit. The chain is Large ribosomal subunit protein uL3 from Acinetobacter baylyi (strain ATCC 33305 / BD413 / ADP1).